A 269-amino-acid polypeptide reads, in one-letter code: 3-methyl-2-oxobutanoate hydroxymethyltransferase (269 aa).

Asp-51 and Asp-90 together coordinate Mg(2+). Residues 51–52, Asp-90, and Lys-120 contribute to the 3-methyl-2-oxobutanoate site; that span reads DS. Glu-122 serves as a coordination point for Mg(2+). Catalysis depends on Glu-187, which acts as the Proton acceptor.

It belongs to the PanB family. Homodecamer; pentamer of dimers. It depends on Mg(2+) as a cofactor.

The protein localises to the cytoplasm. The catalysed reaction is 3-methyl-2-oxobutanoate + (6R)-5,10-methylene-5,6,7,8-tetrahydrofolate + H2O = 2-dehydropantoate + (6S)-5,6,7,8-tetrahydrofolate. Its pathway is cofactor biosynthesis; (R)-pantothenate biosynthesis; (R)-pantoate from 3-methyl-2-oxobutanoate: step 1/2. In terms of biological role, catalyzes the reversible reaction in which hydroxymethyl group from 5,10-methylenetetrahydrofolate is transferred onto alpha-ketoisovalerate to form ketopantoate. This Tropheryma whipplei (strain TW08/27) (Whipple's bacillus) protein is 3-methyl-2-oxobutanoate hydroxymethyltransferase.